A 300-amino-acid polypeptide reads, in one-letter code: Bifunctional protein FolD 2 (300 aa).

Residues 165-167, serine 190, and isoleucine 231 each bind NADP(+); that span reads GRS.

The protein belongs to the tetrahydrofolate dehydrogenase/cyclohydrolase family. Homodimer.

The catalysed reaction is (6R)-5,10-methylene-5,6,7,8-tetrahydrofolate + NADP(+) = (6R)-5,10-methenyltetrahydrofolate + NADPH. It carries out the reaction (6R)-5,10-methenyltetrahydrofolate + H2O = (6R)-10-formyltetrahydrofolate + H(+). The protein operates within one-carbon metabolism; tetrahydrofolate interconversion. In terms of biological role, catalyzes the oxidation of 5,10-methylenetetrahydrofolate to 5,10-methenyltetrahydrofolate and then the hydrolysis of 5,10-methenyltetrahydrofolate to 10-formyltetrahydrofolate. The protein is Bifunctional protein FolD 2 of Pseudomonas savastanoi pv. phaseolicola (strain 1448A / Race 6) (Pseudomonas syringae pv. phaseolicola (strain 1448A / Race 6)).